The following is a 42-amino-acid chain: MPTPLSLQALAKKVLATQHISKDHLYFEILWFMVAFFDAYSL.

Belongs to the asfivirus MGF 360 family.

Functionally, plays a role in virus cell tropism, and may be required for efficient virus replication in macrophages. This is Protein MGF 360-20R from African swine fever virus (strain Badajoz 1971 Vero-adapted) (Ba71V).